Here is a 367-residue protein sequence, read N- to C-terminus: MSDSQTLVVKLGTSVLTGGSRRLNRAHIVELVRQCAQLHAAGHRIVIVTSGAIAAGREHLGYPELPATIASKQLLAAVGQSRLIQLWEQLFSIYGIHVGQMLLTRADMEDRERFLNARDTLRALLDNNIVPVINENDAVATAEIKVGDNDNLSALAAILAGADKLLLLTDQQGLFTADPRNNPQAELIKDVHGIDDALRAIAGDSVSGLGTGGMGTKLQAADVACRAGIDTIIAAGSRPGVIGDVMEGISVGTLFHAEATPLENRKRWIFGAPPAGEITVDEGATAAILERGSSLLPKGIKSVTGNFSRGEVIRICNLEGRDIAHGVTRYNSDALRRIAGHHSQQIDAILGYEYGPVAVHRDDMIIR.

Residue lysine 10 coordinates ATP. Substrate contacts are provided by serine 50, aspartate 137, and asparagine 149. Residues 169 to 170 (TD) and 211 to 217 (TGGMGTK) each bind ATP. Residues 275-353 (AGEITVDEGA…QQIDAILGYE (79 aa)) enclose the PUA domain.

This sequence belongs to the glutamate 5-kinase family.

It localises to the cytoplasm. The enzyme catalyses L-glutamate + ATP = L-glutamyl 5-phosphate + ADP. It participates in amino-acid biosynthesis; L-proline biosynthesis; L-glutamate 5-semialdehyde from L-glutamate: step 1/2. Its function is as follows. Catalyzes the transfer of a phosphate group to glutamate to form L-glutamate 5-phosphate. The polypeptide is Glutamate 5-kinase (Enterobacter sp. (strain 638)).